Here is a 470-residue protein sequence, read N- to C-terminus: Cyclin-dependent kinase E-1 (470 aa).

Residues 25–333 form the Protein kinase domain; it reads YNLVGKIGEG…ASQALEHEYF (309 aa). ATP is bound by residues 31–39 and Lys-55; that span reads IGEGTYGLV. At Tyr-36 the chain carries Phosphotyrosine. Catalysis depends on Asp-154, which acts as the Proton acceptor. The tract at residues 428–470 is disordered; that stretch reads LNPSVPLQQQRGMAQPHQQQQLRRKDPGMGMSGYAPPNKSRRL. Residues 432-448 are compositionally biased toward polar residues; sequence VPLQQQRGMAQPHQQQQ.

It belongs to the protein kinase superfamily. CMGC Ser/Thr protein kinase family. CDC2/CDKX subfamily. In terms of assembly, interacts with MED14, HDA19 and LUG. Interacts with KIN10. As to expression, expressed in roots, leaves and stems. Expressed in young dividing tissue, such as shoot and root tips, lateral root primordia, young leaves and flowers. Expressed in the inflorescence meristem, inflorescence stem and young flowers.

Its subcellular location is the nucleus. The catalysed reaction is L-seryl-[protein] + ATP = O-phospho-L-seryl-[protein] + ADP + H(+). The enzyme catalyses L-threonyl-[protein] + ATP = O-phospho-L-threonyl-[protein] + ADP + H(+). It catalyses the reaction [DNA-directed RNA polymerase] + ATP = phospho-[DNA-directed RNA polymerase] + ADP + H(+). Functionally, involved in cell differentiation. Required for the specification of stamen and carpel identities and for the proper termination of stem cells in the floral meristem. This is Cyclin-dependent kinase E-1 (CDKE-1) from Arabidopsis thaliana (Mouse-ear cress).